The following is a 123-amino-acid chain: Protein Wnt-7(I) (123 aa).

S1 carries the O-palmitoleoyl serine; by PORCN lipid modification. Residues C89 and C104 are joined by a disulfide bond. The N-linked (GlcNAc...) asparagine glycan is linked to N90. The short motif at 121 to 123 (CKF) is the Microbody targeting signal element.

Belongs to the Wnt family. Palmitoleoylation is required for efficient binding to frizzled receptors. Depalmitoleoylation leads to Wnt signaling pathway inhibition.

Its subcellular location is the secreted. It localises to the extracellular space. The protein localises to the extracellular matrix. Functionally, ligand for members of the frizzled family of seven transmembrane receptors. Probable developmental protein. May be a signaling molecule which affects the development of discrete regions of tissues. Is likely to signal over only few cell diameters. This Eptatretus stoutii (Pacific hagfish) protein is Protein Wnt-7(I) (WNT-7(I)).